We begin with the raw amino-acid sequence, 211 residues long: Rho-related GTP-binding protein RhoF (211 aa).

Position 1 is an N-acetylmethionine (Met1). 26–33 (GDGGCGKT) serves as a coordination point for GTP. Positions 48–56 (YAPSVFEKY) match the Effector region motif. GTP-binding positions include 73-77 (DTAGQ) and 131-134 (CKTD). Cys208 bears the Cysteine methyl ester mark. A lipid anchor (S-geranylgeranyl cysteine) is attached at Cys208. Residues 209–211 (LLL) constitute a propeptide, removed in mature form.

Belongs to the small GTPase superfamily. Rho family.

It localises to the cell membrane. The protein localises to the cytoplasm. Its subcellular location is the cytoskeleton. In terms of biological role, plasma membrane-associated small GTPase which cycles between an active GTP-bound and an inactive GDP-bound state. Causes the formation of thin, actin-rich surface projections called filopodia. Functions cooperatively with CDC42 and Rac to generate additional structures, increasing the diversity of actin-based morphology. The sequence is that of Rho-related GTP-binding protein RhoF (RHOF) from Homo sapiens (Human).